Reading from the N-terminus, the 218-residue chain is Capsid protein (218 aa).

Residue Met1 is modified to N-acetylmethionine; by host. Positions 1-31 (MDKSGSPNASRTSRRRRPRRGSRSASGADAG) are disordered. Positions 12-22 (TSRRRRPRRGS) are enriched in basic residues.

It belongs to the cucumovirus capsid protein family.

The protein localises to the virion. Functionally, capsid protein. Probably binds RNA and plays a role in packaging. The polypeptide is Capsid protein (Cucumber mosaic virus (strain Trk7) (CMV)).